We begin with the raw amino-acid sequence, 345 residues long: MHTLTLTRPDDWHLHLRDGEALAAVAAYSAREFARAIVMPNLKPPVTTVVQAAAYRERILAALPPGGPAFEPLMTLYLTDNTPPAEIDRVAESGFVHALKLYPAGATTNSDAGVTSLSGCLPTLTRMAELGVPLLVHGEVTDPQIDVFDREAVFIDTVLQPLLAELPTLRVVMEHITTRQAAEFVLAAPDNIAATVTPQHMLMNRNALFTGGLRPHHYCLPVLKREEHRAAIARAVTSGSTRFFLGTDSAPHARHAKEAACGCAGIFSAHAALPLYAEAFEDAGALDRLEAFASFNGPDFYRLPRNTGTVTLKREEWTVPASLPYGNDTLVPLRAGETLRWQLAG.

2 residues coordinate Zn(2+): H13 and H15. Substrate-binding positions include H15 to R17 and N41. Residues K100, H137, and H175 each coordinate Zn(2+). K100 carries the post-translational modification N6-carboxylysine. Position 137 (H137) interacts with substrate. L220 provides a ligand contact to substrate. D248 is a Zn(2+) binding site. D248 is an active-site residue. Substrate is bound by residues H252 and A264.

The protein belongs to the metallo-dependent hydrolases superfamily. DHOase family. Class II DHOase subfamily. As to quaternary structure, homodimer. Requires Zn(2+) as cofactor.

The enzyme catalyses (S)-dihydroorotate + H2O = N-carbamoyl-L-aspartate + H(+). It participates in pyrimidine metabolism; UMP biosynthesis via de novo pathway; (S)-dihydroorotate from bicarbonate: step 3/3. Its function is as follows. Catalyzes the reversible cyclization of carbamoyl aspartate to dihydroorotate. This chain is Dihydroorotase, found in Laribacter hongkongensis (strain HLHK9).